The primary structure comprises 366 residues: MTNHAGFAADDAVTAAVPVQAAQGGRHFPPFLAPSSRLTDCKKAAAHVDLAGAGGVATVPGSWPRHAKPVSGAELDDWMEKHPSALAWFESVAAAAKGKEIVVFLDYDGTLSPIVADPDRAFMSDEMREAVRGVAKHFPTAIVSGRCIDKVFDFVKLEELYYAGSHGMDIRGPTAAASEYNHNMKAKQGDAVTFQPAADFLPVIEEVYHVLKERMASIRGSLVENNKFCLSVHYRCVDEAEWGVLDGKVRAVIEGYPDLRLSKGRKVLEIRPVIDWDKGSALQFLLKSLGYEGRNNVFPIYIGDDRTDEDAFKVLRNMGQGIGILVTKVPKETAASYTLREPSEVKEFLRKLVKIKINGDKGLIGK.

The protein belongs to the trehalose phosphatase family. A divalent metal cation is required as a cofactor.

The catalysed reaction is alpha,alpha-trehalose 6-phosphate + H2O = alpha,alpha-trehalose + phosphate. The protein operates within glycan biosynthesis; trehalose biosynthesis. Functionally, removes the phosphate from trehalose 6-phosphate to produce free trehalose. Trehalose accumulation in plant may improve abiotic stress tolerance. In Oryza sativa subsp. japonica (Rice), this protein is Probable trehalose-phosphate phosphatase 3 (TPP3).